A 627-amino-acid chain; its full sequence is Carene synthase 2, chloroplastic (627 aa).

The N-terminal 36 residues, 1 to 36 (MSVISIVPLASKSCLYKSLMSSTHELKALCRPIVTL), are a transit peptide targeting the chloroplast. Residues D378, D382, and D530 each coordinate Mg(2+). The DDXXD motif signature appears at 378-382 (DDMYD).

Belongs to the terpene synthase family. Tpsd subfamily. Mg(2+) is required as a cofactor. Mn(2+) serves as cofactor.

The protein resides in the plastid. It localises to the chloroplast. It catalyses the reaction (2E)-geranyl diphosphate = (+)-car-3-ene + diphosphate. It participates in terpene metabolism; oleoresin biosynthesis. Functionally, terpene synthase (TPS) involved in defensive oleoresin formation in conifers in response to insect attack (e.g. white pine weevil P.strobi) or other injury. The protein is Carene synthase 2, chloroplastic (TPS-3car2) of Picea sitchensis (Sitka spruce).